The sequence spans 66 residues: Large ribosomal subunit protein bL33c (66 aa).

This sequence belongs to the bacterial ribosomal protein bL33 family.

The protein resides in the plastid. It localises to the chloroplast. In Manihot esculenta (Cassava), this protein is Large ribosomal subunit protein bL33c.